A 289-amino-acid polypeptide reads, in one-letter code: Phenylalanine-4-hydroxylase (289 aa).

Fe cation-binding residues include histidine 144, histidine 149, and glutamate 189.

Belongs to the biopterin-dependent aromatic amino acid hydroxylase family. Requires Fe(2+) as cofactor.

It carries out the reaction (6R)-L-erythro-5,6,7,8-tetrahydrobiopterin + L-phenylalanine + O2 = (4aS,6R)-4a-hydroxy-L-erythro-5,6,7,8-tetrahydrobiopterin + L-tyrosine. The protein operates within amino-acid degradation; L-phenylalanine degradation; acetoacetate and fumarate from L-phenylalanine: step 1/6. The chain is Phenylalanine-4-hydroxylase (phhA) from Vibrio cholerae serotype O1 (strain ATCC 39315 / El Tor Inaba N16961).